The primary structure comprises 119 residues: Large ribosomal subunit protein bL20 (119 aa).

This sequence belongs to the bacterial ribosomal protein bL20 family.

Its function is as follows. Binds directly to 23S ribosomal RNA and is necessary for the in vitro assembly process of the 50S ribosomal subunit. It is not involved in the protein synthesizing functions of that subunit. In Brevibacillus brevis (strain 47 / JCM 6285 / NBRC 100599), this protein is Large ribosomal subunit protein bL20.